Here is a 655-residue protein sequence, read N- to C-terminus: Fidgetin-like protein 1 (655 aa).

A disordered region spans residues 289-313 (QQKKHSNQPQRNPGPLYGGGKKSLG). Residues Ala385 and 425–430 (GTGKTL) each bind ATP.

This sequence belongs to the AAA ATPase family. Hexamer. Mg(2+) is required as a cofactor.

It localises to the nucleus. The protein resides in the cytoplasm. Its subcellular location is the perinuclear region. The enzyme catalyses ATP + H2O = ADP + phosphate + H(+). May be involved in DNA double-strand break (DBS) repair via homologous recombination (HR). May regulate osteoblast proliferation and differentiation. This Xenopus laevis (African clawed frog) protein is Fidgetin-like protein 1 (fignl1).